A 733-amino-acid chain; its full sequence is Wall-associated receptor kinase 5 (733 aa).

An N-terminal signal peptide occupies residues 1–23 (MKVHSLFLMAIFFYLAYTQLVKA). Residues 24–330 (QPRDDCQTRC…IDTPKEEPKY (307 aa)) lie on the Extracellular side of the membrane. N-linked (GlcNAc...) asparagine glycosylation is found at Asn-57, Asn-77, Asn-110, Asn-137, Asn-184, Asn-206, Asn-218, Asn-232, and Asn-247. The EGF-like 1 domain maps to 231–278 (GNQTCEQVVGRNICGGNSTCFDSTRGKGYNCKCLQGFDGNPYLSDGCQ). 6 cysteine pairs are disulfide-bonded: Cys-235/Cys-250, Cys-244/Cys-261, Cys-263/Cys-277, Cys-283/Cys-296, Cys-290/Cys-305, and Cys-307/Cys-320. Positions 279–321 (DINECTTRIHNCSDTSTCENTLGSFHCQCPSGSDLNTTTMSCI) constitute an EGF-like 2; calcium-binding domain. Asn-289 is a glycosylation site (N-linked (GlcNAc...) asparagine). N-linked (GlcNAc...) asparagine glycosylation occurs at Asn-314. Residues 331-351 (LGWTTVLLGTTIGFLIILLTI) form a helical membrane-spanning segment. Over 352 to 733 (SYIQQKMRHR…VTRLDIETGR (382 aa)) the chain is Cytoplasmic. Phosphothreonine is present on Thr-397. One can recognise a Protein kinase domain in the interval 408 to 691 (YNESRILGQG…RVKTTKHQWS (284 aa)). Residues 414–422 (LGQGGQGTV) and Lys-436 each bind ATP. Tyr-481 carries the phosphotyrosine modification. Asp-533 serves as the catalytic Proton acceptor. 2 positions are modified to phosphothreonine: Thr-567 and Thr-572. A Phosphotyrosine modification is found at Tyr-580.

This sequence belongs to the protein kinase superfamily. Ser/Thr protein kinase family. Predominantly expressed in green tissues such as stems and leaves.

The protein localises to the membrane. It catalyses the reaction L-seryl-[protein] + ATP = O-phospho-L-seryl-[protein] + ADP + H(+). The enzyme catalyses L-threonyl-[protein] + ATP = O-phospho-L-threonyl-[protein] + ADP + H(+). Functionally, serine/threonine-protein kinase that may function as a signaling receptor of extracellular matrix component. Binding to pectin may have significance in the control of cell expansion, morphogenesis and development. The sequence is that of Wall-associated receptor kinase 5 (WAK5) from Arabidopsis thaliana (Mouse-ear cress).